The chain runs to 373 residues: tRNA (guanine(26)-N(2))-dimethyltransferase (373 aa).

A Trm1 methyltransferase domain is found at Lys-2 to Ile-365. The S-adenosyl-L-methionine site is built by Arg-35, Arg-66, Asp-86, Asp-113, and Ala-114.

It belongs to the class I-like SAM-binding methyltransferase superfamily. Trm1 family.

It catalyses the reaction guanosine(26) in tRNA + 2 S-adenosyl-L-methionine = N(2)-dimethylguanosine(26) in tRNA + 2 S-adenosyl-L-homocysteine + 2 H(+). Its function is as follows. Dimethylates a single guanine residue at position 26 of a number of tRNAs using S-adenosyl-L-methionine as donor of the methyl groups. In Methanococcus maripaludis (strain C7 / ATCC BAA-1331), this protein is tRNA (guanine(26)-N(2))-dimethyltransferase.